Here is a 382-residue protein sequence, read N- to C-terminus: MSSVTGFYIPPISFFGEGALEETADYIKNKDYKKALIVTDPGIAAIGLSGRVQKMLEERGLNVAIYDKTQPNPNIANVTAGLKVLKEQNSEIVVSIGGGSAHDNAKAIALLATNGGEIGDYEGVNQSKKAALPLFAINTTAGTASEMTRFTIISNEEKKIKMAIIDNNVTPAVAVNDPSTMFGLPPALTAATGLDALTHCIEAYVSTASNPITDACALKGIDLINESLVAAYKDGKDKKARTDMCYAEYLAGMAFNNASLGYVHALAHQLGGFYHLPHGVCNAVLLPHVQEANMQCPKAKKRLGEIALHFGASQEDPEETIKALHVLNRTMNIPRNLKELGVKTEDFEILAEHAMHDACHLTNPVQFTKEQVVAIIKKAYEY.

Belongs to the iron-containing alcohol dehydrogenase family. As to quaternary structure, homodimer. Requires Zn(2+) as cofactor. The cofactor is Fe(2+).

It localises to the mitochondrion. The enzyme catalyses a primary alcohol + NAD(+) = an aldehyde + NADH + H(+). It carries out the reaction a secondary alcohol + NAD(+) = a ketone + NADH + H(+). With respect to regulation, inhibited by EDTA. In terms of biological role, reduces acetaldehyde to ethanol during glucose fermentation. Specific for ethanol. Shows drastically reduced activity towards primary alcohols from 4 carbon atoms upward. Isomers of aliphatic alcohol, as well as secondary alcohols and glycerol are not used at all. The sequence is that of Alcohol dehydrogenase 4 (ADH4) from Saccharomyces cerevisiae (strain YJM789) (Baker's yeast).